An 80-amino-acid chain; its full sequence is MGISMWQLLIVLLIIVLLFGTKKLKNIGGDLGGAVKGFKKAMSDGESEEDKEPKKLSQNESRTIEGSVERNDAKTESKHS.

Residues 1–21 (MGISMWQLLIVLLIIVLLFGT) form a helical membrane-spanning segment. Residues 39-80 (KKAMSDGESEEDKEPKKLSQNESRTIEGSVERNDAKTESKHS) form a disordered region. Residues 67-80 (SVERNDAKTESKHS) are compositionally biased toward basic and acidic residues.

This sequence belongs to the TatA/E family. As to quaternary structure, the Tat system comprises two distinct complexes: a TatABC complex, containing multiple copies of TatA, TatB and TatC subunits, and a separate TatA complex, containing only TatA subunits. Substrates initially bind to the TatABC complex, which probably triggers association of the separate TatA complex to form the active translocon.

Its subcellular location is the cell inner membrane. Part of the twin-arginine translocation (Tat) system that transports large folded proteins containing a characteristic twin-arginine motif in their signal peptide across membranes. TatA could form the protein-conducting channel of the Tat system. This is Sec-independent protein translocase protein TatA from Hahella chejuensis (strain KCTC 2396).